The primary structure comprises 2177 residues: Mediator of RNA polymerase II transcription subunit 12 (2177 aa).

A disordered region spans residues R12–E35. Position 80 is an N6-acetyllysine (K80). Residue Y166 is modified to Phosphotyrosine. Disordered stretches follow at residues Q323–T344, G627–D669, T690–K717, and T1241–R1266. 4 positions are modified to phosphoserine: S635, S665, S698, and S700. Positions E702–K717 are enriched in basic and acidic residues. A phosphoserine mark is found at S1258 and S1269. Residues A1394–S1411 show a composition bias toward low complexity. Disordered stretches follow at residues A1394 to P1415, E1450 to S1474, and Y1738 to I1829. Composition is skewed to basic and acidic residues over residues E1450–K1469 and E1758–K1771. Residues L1616 to Q2051 form an interaction with CTNNB1 and GLI3 region. The span at K1784–S1793 shows a compositional bias: basic residues. K1798 carries the N6-acetyllysine modification. R1899 bears the Asymmetric dimethylarginine; alternate mark. The residue at position 1899 (R1899) is an Omega-N-methylarginine; alternate. Residue R1910 is modified to Omega-N-methylarginine. 2 disordered regions span residues Q1919–L1938 and S1967–R1989. Positions V1927–L1938 are enriched in polar residues. Residues S1967 to T1980 are compositionally biased toward low complexity. 2 positions are modified to asymmetric dimethylarginine: R1994 and R2015. 3 stretches are compositionally biased toward low complexity: residues Q2115 to A2125, S2133 to Q2149, and L2158 to T2171. 2 disordered regions span residues Q2115–Q2149 and L2158–Y2177.

It belongs to the Mediator complex subunit 12 family. As to quaternary structure, component of the Mediator complex, which is composed of MED1, MED4, MED6, MED7, MED8, MED9, MED10, MED11, MED12, MED13, MED13L, MED14, MED15, MED16, MED17, MED18, MED19, MED20, MED21, MED22, MED23, MED24, MED25, MED26, MED27, MED29, MED30, MED31, CCNC, CDK8 and CDC2L6/CDK11. The MED12, MED13, CCNC and CDK8 subunits form a distinct module termed the CDK8 module. Mediator containing the CDK8 module is less active than Mediator lacking this module in supporting transcriptional activation. Individual preparations of the Mediator complex lacking one or more distinct subunits have been variously termed ARC, CRSP, DRIP, PC2, SMCC and TRAP. Also interacts with CTNNB1 and GLI3. Ubiquitous.

Its subcellular location is the nucleus. Component of the Mediator complex, a coactivator involved in the regulated transcription of nearly all RNA polymerase II-dependent genes. Mediator functions as a bridge to convey information from gene-specific regulatory proteins to the basal RNA polymerase II transcription machinery. Mediator is recruited to promoters by direct interactions with regulatory proteins and serves as a scaffold for the assembly of a functional pre-initiation complex with RNA polymerase II and the general transcription factors. This subunit may specifically regulate transcription of targets of the Wnt signaling pathway and SHH signaling pathway. The chain is Mediator of RNA polymerase II transcription subunit 12 (MED12) from Homo sapiens (Human).